A 208-amino-acid chain; its full sequence is Large ribosomal subunit protein uL3 (208 aa).

Positions 122–148 (KRHGQSRGPMAHGSRYHRRPGSMGPVA) are disordered.

This sequence belongs to the universal ribosomal protein uL3 family. As to quaternary structure, part of the 50S ribosomal subunit. Forms a cluster with proteins L14 and L19.

One of the primary rRNA binding proteins, it binds directly near the 3'-end of the 23S rRNA, where it nucleates assembly of the 50S subunit. The protein is Large ribosomal subunit protein uL3 of Streptococcus pyogenes serotype M1.